The sequence spans 490 residues: GPI-anchored wall transfer protein 1 (490 aa).

Residues 1–19 (MSTLKQRKEDFVTGLNGGS) are Lumenal-facing. Residues 20–40 (ITEINAVTSIALVTYISWNLL) traverse the membrane as a helical segment. Over 41-54 (KNSNLMPPGISSVQ) the chain is Cytoplasmic. Residues 55-75 (YIIDFALNWVALLLSITIYAS) traverse the membrane as a helical segment. Glu76 is a topological domain (lumenal). Residues 77-97 (PYLLNTLILLPCLLAFIYGKF) traverse the membrane as a helical segment. Topologically, residues 98–128 (TSSSKPSNPIYNKKKMITQRFQLEKKPYITA) are cytoplasmic. The helical transmembrane segment at 129 to 149 (YRGGMLILTAIAILAVDFPIF) threads the bilayer. Residues 150–157 (PRRFAKVE) lie on the Lumenal side of the membrane. A helical transmembrane segment spans residues 158–178 (TWGTSLMDLGVGSFVFSNGIV). At 179–199 (SSRALLKNLSLKSKPSFLKNA) the chain is on the cytoplasmic side. The chain crosses the membrane as a helical span at residues 200–220 (FNALKSGGTLLFLGLLRLFFV). The Lumenal segment spans residues 221-231 (KNLEYQEHVTE). The helical transmembrane segment at 232–252 (YGVHWNFFITLSLLPLVLTFI) threads the bilayer. Residues 253–257 (DPVTR) are Cytoplasmic-facing. The chain crosses the membrane as a helical span at residues 258-278 (MVPRCSIAIFISCIYEWLLLK). Over 279–301 (DDRTLNFLILADRNCFFSANREG) the chain is Lumenal. A helical membrane pass occupies residues 302–322 (IFSFLGYCSIFLWGQNTGFYL). The Cytoplasmic segment spans residues 323–356 (LGNKPTLNNLYKPSTQDVVAASKKSSTWDYWTSV). The helical transmembrane segment at 357-377 (TPLSGLCIWSTIFLVISQLVF) threads the bilayer. The Lumenal segment spans residues 378–390 (QYHPYSVSRRFAN). A helical transmembrane segment spans residues 391–411 (LPYTLWVITYNLLFLTGYCLT). Residues 412–435 (DKIFGNSSEYYKVAECLESINSNG) lie on the Cytoplasmic side of the membrane. The helical transmembrane segment at 436–456 (LFLFLLANVSTGLVNMSMVTI) threads the bilayer. Residues 457–460 (DSSP) are Lumenal-facing. The helical transmembrane segment at 461 to 481 (LKSFLVLLAYCSFIAVISVFL) threads the bilayer. Over 482-490 (YRKRIFIKL) the chain is Cytoplasmic.

This sequence belongs to the PIGW family.

The protein localises to the endoplasmic reticulum membrane. The protein operates within glycolipid biosynthesis; glycosylphosphatidylinositol-anchor biosynthesis. Probable acetyltransferase, which acetylates the inositol ring of phosphatidylinositol during biosynthesis of GPI-anchor. Acetylation during GPI-anchor biosynthesis is not essential for the subsequent mannosylation and is usually removed soon after the attachment of GPIs to proteins. The sequence is that of GPI-anchored wall transfer protein 1 (GWT1) from Saccharomyces cerevisiae (strain ATCC 204508 / S288c) (Baker's yeast).